The sequence spans 339 residues: Phosphate acyltransferase (339 aa).

It belongs to the PlsX family. Homodimer. Probably interacts with PlsY.

The protein localises to the cytoplasm. It carries out the reaction a fatty acyl-[ACP] + phosphate = an acyl phosphate + holo-[ACP]. Its pathway is lipid metabolism; phospholipid metabolism. Catalyzes the reversible formation of acyl-phosphate (acyl-PO(4)) from acyl-[acyl-carrier-protein] (acyl-ACP). This enzyme utilizes acyl-ACP as fatty acyl donor, but not acyl-CoA. The chain is Phosphate acyltransferase from Helicobacter pylori (strain Shi470).